The sequence spans 698 residues: MEPYWNETNGHAAHPVKYESEAAVSSFPYCTESSLNFSTSATAYSEDDAEYATGRRNKTSRQDPLSHRIIEKRRRDRMNSCLADLSRLIPPQYQRKGRGRIEKTEIIEMAIRHLKHLQSECQQKESDYRSGYMDCMKEAAKFLYDVHMQDFCHRLLGRLQEHIDEMFKTDCYKSTRSCHMPDNVSASSGSPHQAYHPPLCHLRDMLATSASDVEHSQDHNDVKDLSFRNHLNQLQRSQQAAAAAAVAAAAVAVANGSSPASNAGVDSKVPLTNGGGTGGAPPAADNVPSNSTGSGSAAACAGGNSNSSGSNSSNAASSTICPPAGGSCPAKVTPLAAHQQPHQAPVITSTAPHHHHHHTDSSHHDFESSREPILHTDTSNMHSPPPRDLLLQQHPHLAHSHHTQDSLMSVRMRNYSESSHEIEHNNNYKYKNHIKERFVHELHDEETSSEHCPVAAHLQSDHSHLQALSEHSKDGTEPEIAPIMAKKRKLAEAAANGEIPLEVHTESSNAGASSANRLDKPSPSFNFSDIKDIKAELHNGNSNSSPLLAKLSAVAAAGGQLSTPSSTTAPLPPRHTFTVPIFALHGQGNYYVPLNVDYNALVPFLNGMDLLEKSYTSMPVVHPININVNFMPSSPSASLLAAAAAAAVAVGKQQQQQAVVAAGAGLPLSTNSAAAQAAAVAAAAVAKAKLEQAMNQSW.

The segment at 62–75 (QDPLSHRIIEKRRR) is basic motif; degenerate. One can recognise a bHLH domain in the interval 62–117 (QDPLSHRIIEKRRRDRMNSCLADLSRLIPPQYQRKGRGRIEKTEIIEMAIRHLKHL). The tract at residues 76–117 (DRMNSCLADLSRLIPPQYQRKGRGRIEKTEIIEMAIRHLKHL) is helix-loop-helix motif. Positions 128–159 (YRSGYMDCMKEAAKFLYDVHMQDFCHRLLGRL) constitute an Orange domain. Disordered stretches follow at residues 257 to 319 (SSPA…ASST) and 349 to 369 (STAP…FESS). A compositionally biased stretch (low complexity) spans 280 to 318 (APPAADNVPSNSTGSGSAAACAGGNSNSSGSNSSNAASS). The segment covering 359–369 (TDSSHHDFESS) has biased composition (basic and acidic residues).

In terms of tissue distribution, expressed in adult brain where it is detected in the dorsal lateral neurons, small and large ventral lateral neurons and dorsal neurons 1, 2 and 3 (at protein level). Expressed at constant levels in a 12 hour light / 12 hour day cycle (at protein level). Strongly expressed in pacemaker neurons. In adults, mRNA expression oscillates in a circadian manner with a peak at around 14 hour Zeitgeber time. mRNA levels oscillate in a rhythmic manner in both 12 hour light / 12 hour dark and constant dark conditions with a morning peak around the time of lights-on and an evening peak around the time of lights-off in light/dark conditions. During stage 8 of embryonic development, expressed in the anterior and posterior midgut primordia and expression in the gut continues throughout embryonic development. During germ band retraction, expression is initiated in many tissues in a prominent segmentally repeated pattern. Later, expression is ubiquitous but has higher levels in segmentally repeated clusters of cells. Expression is also found in cells of the amnioserosa, in the head region, in posterior spiracles and in tracheal trees.

It is found in the nucleus. Its function is as follows. Plays a role in the regulation of circadian rhythms. Transcriptional repressor which inhibits Clock-mediated transcriptional activation by binding to E boxes in the promoters of Clock target genes and repressing their transcription. E box binding activity is time-dependent with higher binding activity seen in the early morning (zeitgeber time 2) than early evening (zeitgeber time 14) and is dependent on the presence of the circadian protein per. It is likely that per binds to Clock-cycle heterodimers, reducing their affinity for E box binding and allowing cwo to bind instead. Negatively regulates its own expression. The sequence is that of Transcription factor cwo from Drosophila melanogaster (Fruit fly).